We begin with the raw amino-acid sequence, 125 residues long: Small ribosomal subunit protein uS11 (125 aa).

It belongs to the universal ribosomal protein uS11 family. Part of the 30S ribosomal subunit. Interacts with proteins S7 and S18. Binds to IF-3.

Located on the platform of the 30S subunit, it bridges several disparate RNA helices of the 16S rRNA. Forms part of the Shine-Dalgarno cleft in the 70S ribosome. This Aquifex aeolicus (strain VF5) protein is Small ribosomal subunit protein uS11.